Reading from the N-terminus, the 420-residue chain is Tryptophan synthase beta chain (420 aa).

N6-(pyridoxal phosphate)lysine is present on K100.

This sequence belongs to the TrpB family. As to quaternary structure, tetramer of two alpha and two beta chains. Pyridoxal 5'-phosphate is required as a cofactor.

The catalysed reaction is (1S,2R)-1-C-(indol-3-yl)glycerol 3-phosphate + L-serine = D-glyceraldehyde 3-phosphate + L-tryptophan + H2O. It functions in the pathway amino-acid biosynthesis; L-tryptophan biosynthesis; L-tryptophan from chorismate: step 5/5. Functionally, the beta subunit is responsible for the synthesis of L-tryptophan from indole and L-serine. The sequence is that of Tryptophan synthase beta chain from Pyrobaculum islandicum (strain DSM 4184 / JCM 9189 / GEO3).